The chain runs to 139 residues: Translation initiation factor 2 subunit beta (139 aa).

The protein belongs to the eIF-2-beta/eIF-5 family. In terms of assembly, heterotrimer composed of an alpha, a beta and a gamma chain.

EIF-2 functions in the early steps of protein synthesis by forming a ternary complex with GTP and initiator tRNA. The polypeptide is Translation initiation factor 2 subunit beta (Sulfurisphaera tokodaii (strain DSM 16993 / JCM 10545 / NBRC 100140 / 7) (Sulfolobus tokodaii)).